A 151-amino-acid polypeptide reads, in one-letter code: Putative pre-16S rRNA nuclease (151 aa).

It belongs to the YqgF nuclease family.

Its subcellular location is the cytoplasm. Could be a nuclease involved in processing of the 5'-end of pre-16S rRNA. This is Putative pre-16S rRNA nuclease from Onion yellows phytoplasma (strain OY-M).